Consider the following 212-residue polypeptide: Imidazole glycerol phosphate synthase subunit HisH (212 aa).

In terms of domain architecture, Glutamine amidotransferase type-1 spans 3–212; that stretch reads DIAIVDYGMG…LGNFVRWKPV (210 aa). The active-site Nucleophile is the C82. Residues H191 and E193 contribute to the active site.

Heterodimer of HisH and HisF.

It localises to the cytoplasm. The enzyme catalyses 5-[(5-phospho-1-deoxy-D-ribulos-1-ylimino)methylamino]-1-(5-phospho-beta-D-ribosyl)imidazole-4-carboxamide + L-glutamine = D-erythro-1-(imidazol-4-yl)glycerol 3-phosphate + 5-amino-1-(5-phospho-beta-D-ribosyl)imidazole-4-carboxamide + L-glutamate + H(+). It catalyses the reaction L-glutamine + H2O = L-glutamate + NH4(+). It participates in amino-acid biosynthesis; L-histidine biosynthesis; L-histidine from 5-phospho-alpha-D-ribose 1-diphosphate: step 5/9. Functionally, IGPS catalyzes the conversion of PRFAR and glutamine to IGP, AICAR and glutamate. The HisH subunit catalyzes the hydrolysis of glutamine to glutamate and ammonia as part of the synthesis of IGP and AICAR. The resulting ammonia molecule is channeled to the active site of HisF. This Nitrosospira multiformis (strain ATCC 25196 / NCIMB 11849 / C 71) protein is Imidazole glycerol phosphate synthase subunit HisH.